The following is an 807-amino-acid chain: Glycerol-3-phosphate acyltransferase (807 aa).

The HXXXXD motif signature appears at 305–310 (CHRSHM).

This sequence belongs to the GPAT/DAPAT family.

It is found in the cell inner membrane. The enzyme catalyses sn-glycerol 3-phosphate + an acyl-CoA = a 1-acyl-sn-glycero-3-phosphate + CoA. It participates in phospholipid metabolism; CDP-diacylglycerol biosynthesis; CDP-diacylglycerol from sn-glycerol 3-phosphate: step 1/3. The sequence is that of Glycerol-3-phosphate acyltransferase from Aliivibrio fischeri (strain MJ11) (Vibrio fischeri).